The following is a 391-amino-acid chain: Phosphoglycerate kinase (391 aa).

Substrate is bound by residues 19–21, Arg-35, 58–61, Arg-117, and Arg-150; these read DYN and HMGR. ATP is bound by residues Lys-201, Glu-323, and 349 to 352; that span reads GGDT.

The protein belongs to the phosphoglycerate kinase family. In terms of assembly, monomer.

It localises to the cytoplasm. The enzyme catalyses (2R)-3-phosphoglycerate + ATP = (2R)-3-phospho-glyceroyl phosphate + ADP. The protein operates within carbohydrate degradation; glycolysis; pyruvate from D-glyceraldehyde 3-phosphate: step 2/5. The sequence is that of Phosphoglycerate kinase from Desulforapulum autotrophicum (strain ATCC 43914 / DSM 3382 / VKM B-1955 / HRM2) (Desulfobacterium autotrophicum).